The primary structure comprises 527 residues: PTS system maltose-specific EIICB component (527 aa).

Residues 1-418 enclose the PTS EIIC type-1 domain; it reads MMQKIQRFGS…FNIATPGREK (418 aa). Transmembrane regions (helical) follow at residues 8-28, 59-79, 93-113, 132-152, 173-193, 200-220, 224-244, 276-296, 305-325, 326-346, 357-377, and 382-402; these read FGSA…IVGI, GWTV…VALA, VYLT…GAFG, IKTL…VVFL, YIVM…SYIW, IGSL…IYTF, ILIP…GPAV, FALH…AFYV, LVAG…ITEP, IEFT…VLAA, VVGN…IPLF, and MTYV…FFVF. The PTS EIIB type-1 domain maps to 449–527; sequence DDTAFLYIEA…RERVEKILNQ (79 aa). The Phosphocysteine intermediate; for EIIB activity role is filled by C471.

The protein localises to the cell membrane. The enzyme catalyses D-maltose(out) + N(pros)-phospho-L-histidyl-[protein] = alpha-maltose 6'-phosphate(in) + L-histidyl-[protein]. Its function is as follows. The phosphoenolpyruvate-dependent sugar phosphotransferase system (sugar PTS), a major carbohydrate active transport system, catalyzes the phosphorylation of incoming sugar substrates concomitantly with their translocation across the cell membrane. This system is involved in maltose transport. The chain is PTS system maltose-specific EIICB component from Bacillus subtilis (strain 168).